The following is a 296-amino-acid chain: Bifunctional protein FolD 1/3 (296 aa).

Residues 166–168 (GRS), serine 191, and isoleucine 232 each bind NADP(+).

This sequence belongs to the tetrahydrofolate dehydrogenase/cyclohydrolase family. Homodimer.

It carries out the reaction (6R)-5,10-methylene-5,6,7,8-tetrahydrofolate + NADP(+) = (6R)-5,10-methenyltetrahydrofolate + NADPH. It catalyses the reaction (6R)-5,10-methenyltetrahydrofolate + H2O = (6R)-10-formyltetrahydrofolate + H(+). It functions in the pathway one-carbon metabolism; tetrahydrofolate interconversion. Its function is as follows. Catalyzes the oxidation of 5,10-methylenetetrahydrofolate to 5,10-methenyltetrahydrofolate and then the hydrolysis of 5,10-methenyltetrahydrofolate to 10-formyltetrahydrofolate. This is Bifunctional protein FolD 1/3 from Ruegeria pomeroyi (strain ATCC 700808 / DSM 15171 / DSS-3) (Silicibacter pomeroyi).